We begin with the raw amino-acid sequence, 56 residues long: Venom peptide 5 (56 aa).

A signal peptide spans 1–26; that stretch reads MKTASFILSFVVLLIVIITWIGEVSA. A propeptide spanning residues 27–42 is cleaved from the precursor; it reads VSEPEPVAKATAHAAA. A disulfide bridge links Cys49 with Cys54.

In terms of processing, probably contains 1 disulfide bond, which may be crucial for activity, since the linear peptide without disulfide bond is inactive. In terms of tissue distribution, expressed by the venom gland.

The protein localises to the secreted. The protein is Venom peptide 5 of Eumenes pomiformis (Potter wasp).